Consider the following 348-residue polypeptide: Pyruvate dehydrogenase E1 component subunit alpha (348 aa).

The tract at residues 1–21 is disordered; it reads MAPRKSASVSSRKTAAKPAKK.

Heterodimer of an alpha and a beta chain. Thiamine diphosphate is required as a cofactor.

The enzyme catalyses N(6)-[(R)-lipoyl]-L-lysyl-[protein] + pyruvate + H(+) = N(6)-[(R)-S(8)-acetyldihydrolipoyl]-L-lysyl-[protein] + CO2. Its function is as follows. The pyruvate dehydrogenase complex catalyzes the overall conversion of pyruvate to acetyl-CoA and CO(2). It contains multiple copies of three enzymatic components: pyruvate dehydrogenase (E1), dihydrolipoamide acetyltransferase (E2) and lipoamide dehydrogenase (E3). This Rhizobium meliloti (strain 1021) (Ensifer meliloti) protein is Pyruvate dehydrogenase E1 component subunit alpha (pdhA).